A 66-amino-acid polypeptide reads, in one-letter code: Large ribosomal subunit protein bL33c (66 aa).

The protein belongs to the bacterial ribosomal protein bL33 family.

The protein resides in the plastid. It localises to the chloroplast. The protein is Large ribosomal subunit protein bL33c of Cycas taitungensis (Prince sago).